We begin with the raw amino-acid sequence, 493 residues long: UPF0699 transmembrane protein YdbT (493 aa).

Transmembrane regions (helical) follow at residues 18–38, 46–66, 188–208, 232–252, 370–390, and 393–413; these read CHTI…VYIV, FYGA…SIIK, LMAA…FALI, IGIY…FSIA, VIFS…WGYL, and ILLP…AWTI.

Belongs to the UPF0699 family.

It is found in the cell membrane. The sequence is that of UPF0699 transmembrane protein YdbT (ydbT) from Bacillus subtilis (strain 168).